Consider the following 373-residue polypeptide: Transaldolase (373 aa).

The Schiff-base intermediate with substrate role is filled by lysine 143.

Belongs to the transaldolase family. Type 2 subfamily.

It is found in the cytoplasm. It catalyses the reaction D-sedoheptulose 7-phosphate + D-glyceraldehyde 3-phosphate = D-erythrose 4-phosphate + beta-D-fructose 6-phosphate. Its pathway is carbohydrate degradation; pentose phosphate pathway; D-glyceraldehyde 3-phosphate and beta-D-fructose 6-phosphate from D-ribose 5-phosphate and D-xylulose 5-phosphate (non-oxidative stage): step 2/3. Its function is as follows. Transaldolase is important for the balance of metabolites in the pentose-phosphate pathway. The protein is Transaldolase (tal) of Mycobacterium tuberculosis (strain ATCC 25618 / H37Rv).